A 388-amino-acid chain; its full sequence is Succinate--CoA ligase [ADP-forming] subunit beta (388 aa).

An ATP-grasp domain is found at 9–244 (KQLFARYGMP…KSQEDEREAQ (236 aa)). ATP-binding positions include Lys46, 53–55 (GRG), Glu99, Thr102, and Glu107. Positions 199 and 213 each coordinate Mg(2+). Residues Asn264 and 321–323 (GIV) contribute to the substrate site.

Belongs to the succinate/malate CoA ligase beta subunit family. Heterotetramer of two alpha and two beta subunits. Mg(2+) is required as a cofactor.

It catalyses the reaction succinate + ATP + CoA = succinyl-CoA + ADP + phosphate. It carries out the reaction GTP + succinate + CoA = succinyl-CoA + GDP + phosphate. The protein operates within carbohydrate metabolism; tricarboxylic acid cycle; succinate from succinyl-CoA (ligase route): step 1/1. In terms of biological role, succinyl-CoA synthetase functions in the citric acid cycle (TCA), coupling the hydrolysis of succinyl-CoA to the synthesis of either ATP or GTP and thus represents the only step of substrate-level phosphorylation in the TCA. The beta subunit provides nucleotide specificity of the enzyme and binds the substrate succinate, while the binding sites for coenzyme A and phosphate are found in the alpha subunit. In Yersinia enterocolitica serotype O:8 / biotype 1B (strain NCTC 13174 / 8081), this protein is Succinate--CoA ligase [ADP-forming] subunit beta.